The following is a 471-amino-acid chain: MKIKTRFAPSPTGYLHVGGARTALYSWLFSRHLGGEFVLRIEDTDLERSTQEAIDAIMDGMNWLNLDWDEGPYFQTKRFDRYNAVIDQMLDAGTAYRCYCSKERLEALREAQMANGEKPRYDGHCRDSQCTHGADEPSVVRFRNPQEGSVIFDDKIRGPIEFSNQELDDLIIRRTDGSPTYNFCVVIDDWDMEITHVIRGEDHINNTPRQINILKALGAPVPEYAHVSMILGDDGKKLSKRHGAVGVMQYRDDGYLPEALLNYLVRLGWSHGDQEIFSIEEMTQLFTLDAVSKSASAFNTEKLQWLNHHYINSLPPEQVAVHLSWHVEQLGIDTRNGPELVEIVKLLGERCKTLKEMAESCRYFYEEFDAFDVDAAKKHLRPVARQPLEAVKVKLAAITEWTTENVHNAIQGTADELGVGMGKVGMPLRVAVTGVGQSPGMDVTVHAIGQARTLARIDKALAFISEREAQQ.

The 'HIGH' region motif lies at P9–G19. C98, C100, C125, and D127 together coordinate Zn(2+). The 'KMSKS' region signature appears at K237–R241. K240 provides a ligand contact to ATP.

Belongs to the class-I aminoacyl-tRNA synthetase family. Glutamate--tRNA ligase type 1 subfamily. Monomer. Zn(2+) serves as cofactor.

The protein resides in the cytoplasm. It carries out the reaction tRNA(Glu) + L-glutamate + ATP = L-glutamyl-tRNA(Glu) + AMP + diphosphate. Catalyzes the attachment of glutamate to tRNA(Glu) in a two-step reaction: glutamate is first activated by ATP to form Glu-AMP and then transferred to the acceptor end of tRNA(Glu). This chain is Glutamate--tRNA ligase, found in Yersinia pseudotuberculosis serotype O:1b (strain IP 31758).